A 758-amino-acid polypeptide reads, in one-letter code: MKLHSSSKIQNHAWLSDARMNNPSETSKSPESGDGNTGTQTNGLDFQKQAVPIGAITSAQAQALLGHLHQVQLAGTSLQAAAHSLNVQTKFKEEPGEPMQVVQPSQQPSLQAAIPQTQLMVAGGQIAGLTLTPAQQQMLLQQAQAQLLAAAVQHSASQQHNAAGATISASAATPMTQIPLSQPIQIAQDLQQLQQLQQQNLNLQQYVLVHPTTNLQSAQFIISQTPQGQQGLLQAQNLLTQLPQQSQANLLQSQPSITLTSQPATPTRTIAATPVQQLPQSQTTPKRIDTPSLEEPSDLEELEQFAKTFKQRRIKLGFTQGDVGLAMGKLYGNDFSQTTISRFEALNLSFKNMCKLKPLLEKWLNDAENITSDSTLTNQSVLNSPGHGMEGLNRRRKKRTSIETNIRVALEKSFLENQKPTSEEITMIADQLNMEKEVIRVWFCNRRQKEKRINPPSSGGSSSSPIKSLFSSPNPLVASTPSLVTSSPATTLTVNPVLPLTSAAAITSFHIPGTTGTSSANTATVISTAPPVSSVLTSPSLSSSPSATAASSEASTAGETSTTQTTSTPMTSSLNTGQVMVTASGIHTAAATALQGAAQLPTNASLAAMAAAAGLNPGLMAPSQFAAGGALFSLNPGALGSALSPALMSNSTLATIQALASSGSLPITSLDAAGNLVFANAGGTPNIVTAPLFLNPQNLSLFTSNPVSLISAASAGATGPITSLHATTSSIDSIQNALFTMASASGAASTTTSASKAQ.

Polar residues-rich tracts occupy residues 1–10 (MKLHSSSKIQ), 19–30 (RMNNPSETSKSP), and 275–285 (VQQLPQSQTTP). 5 disordered regions span residues 1–43 (MKLH…QTNG), 271–296 (AATP…LEEP), 377–398 (TNQS…RRKK), 450–472 (EKRI…LFSS), and 534–573 (SVLT…MTSS). One can recognise a POU-specific domain in the interval 294 to 368 (EEPSDLEELE…LLEKWLNDAE (75 aa)). The homeobox DNA-binding region spans 395 to 454 (RRKKRTSIETNIRVALEKSFLENQKPTSEEITMIADQLNMEKEVIRVWFCNRRQKEKRIN). The span at 455-472 (PPSSGGSSSSPIKSLFSS) shows a compositional bias: low complexity.

The protein belongs to the POU transcription factor family. Class-2 subfamily. Expressed in oocytes (at protein level). Expressed in the tadpole brain (at protein level).

It localises to the cytoplasm. The protein resides in the nucleus. In terms of biological role, transcription factor that binds to the octamer motif (5'-ATTTGCAT-3') and activates the promoters of the genes of some small nuclear RNAs (snRNA) and histone H2B. In vitro does not bind to variant octamer sequences, such as the H2B octamer 5'-GTTTGCAT-3', although binding has been observed in vivo during early embryogenesis, suggesting that interactions between pou2f1 and other factors might be required for octamer-dependent H2B transcription. Acts downstream of Notch signaling during radial glia formation. May be important for gastrulation, possibly through the regulation of an FGF-type signaling pathway. The chain is POU domain, class 2, transcription factor 1 (pou2f1) from Xenopus laevis (African clawed frog).